The chain runs to 436 residues: Probable D-serine dehydratase (436 aa).

Lysine 111 bears the N6-(pyridoxal phosphate)lysine mark.

Belongs to the serine/threonine dehydratase family. DsdA subfamily. Requires pyridoxal 5'-phosphate as cofactor.

The catalysed reaction is D-serine = pyruvate + NH4(+). The polypeptide is Probable D-serine dehydratase (Lactiplantibacillus plantarum (strain ATCC BAA-793 / NCIMB 8826 / WCFS1) (Lactobacillus plantarum)).